Consider the following 333-residue polypeptide: Phosphoribosylformylglycinamidine cyclo-ligase (333 aa).

This sequence belongs to the AIR synthase family.

The protein resides in the cytoplasm. The enzyme catalyses 2-formamido-N(1)-(5-O-phospho-beta-D-ribosyl)acetamidine + ATP = 5-amino-1-(5-phospho-beta-D-ribosyl)imidazole + ADP + phosphate + H(+). The protein operates within purine metabolism; IMP biosynthesis via de novo pathway; 5-amino-1-(5-phospho-D-ribosyl)imidazole from N(2)-formyl-N(1)-(5-phospho-D-ribosyl)glycinamide: step 2/2. This chain is Phosphoribosylformylglycinamidine cyclo-ligase, found in Clostridium perfringens (strain ATCC 13124 / DSM 756 / JCM 1290 / NCIMB 6125 / NCTC 8237 / Type A).